The following is a 537-amino-acid chain: MRKSSIRRRATAFGTAGALVTATLIAGAVSAPAASAAPADGHGHGRSWDREARGAAIAAARAARAGIDWEDCAADWNLPKPIQCGYVTVPMDYAKPYGKQIRLAVDRIGNTGTRSERQGALIYNPGGPGGSGLRFPARVTNKSAVWANTAKAYDFVGFDPRGVGHSAPISCVDPQEFVKAPKADPVPGSEADKRAQRKLAREYAEGCFERSGEMLPHMTTPNTARDLDVIRAALGEKKLNYLGVSYGTYLGAVYGTLFPDHVRRMVVDSVVNPSRDKIWYQANLDQDVAFEGRWKDWQDWVAANDAAYHLGDTRAEVQDQWLKLRAAAAKKPLGGVVGPAELISFFQSAPYYDSAWAPTAEIFSKYVAGDTQALVDAAAPDLSDTAGNASAENGNAVYTAVECTDAKWPANWRTWDRDNTRLHRDHPFMTWANAWMNLPCATWPVKQQTPLNVKTGKGLPPVLIVQSERDAATPYEGAVELHQRFRGSRLITERDAGSHGVTGLVNPCINDRVDTYLLTGRTDARDVTCAPHATPRP.

Residues 1-36 (MRKSSIRRRATAFGTAGALVTATLIAGAVSAPAASA) form the signal peptide. Residues 37–39 (APA) constitute a propeptide that is removed on maturation. Positions 119–497 (GALIYNPGGP…SRLITERDAG (379 aa)) constitute an AB hydrolase-1 domain. Serine 245 (nucleophile) is an active-site residue. Aspartate 470 is an active-site residue. The Proton donor role is filled by histidine 499.

The protein belongs to the peptidase S33 family.

It localises to the secreted. In terms of biological role, cleaves tripeptides from the N-termini of proteins. Does not cleave mono- or dipeptides, or N-terminally blocked peptides. This Streptomyces lividans protein is Tripeptidyl aminopeptidase.